Consider the following 367-residue polypeptide: Phospho-N-acetylmuramoyl-pentapeptide-transferase (367 aa).

Helical transmembrane passes span 28 to 48 (GALMTAMLIAFVFGKPMIGWL), 75 to 95 (TMGGFLILLGVMVGTLLWADL), 96 to 116 (TNAYVWIVIFVTAGFGVIGFI), 134 to 154 (FKLVGEFAIALIAVVWATHTA), 175 to 195 (LMINIGPLFFVFGCVVIVGSG), 206 to 226 (GLAIVPVMIAAATFGVIAYVV), 243 to 263 (AGEILIFCGALIGAGIGFLWW), 271 to 291 (FMGDTGSLSLGGALGTIAVAI), 295 to 315 (LVLAIVGGLFVLELVSVMVQV), and 344 to 364 (TIVIRFWIIAVILALIGLATL).

Belongs to the glycosyltransferase 4 family. MraY subfamily. Mg(2+) is required as a cofactor.

It localises to the cell inner membrane. The enzyme catalyses UDP-N-acetyl-alpha-D-muramoyl-L-alanyl-gamma-D-glutamyl-meso-2,6-diaminopimeloyl-D-alanyl-D-alanine + di-trans,octa-cis-undecaprenyl phosphate = di-trans,octa-cis-undecaprenyl diphospho-N-acetyl-alpha-D-muramoyl-L-alanyl-D-glutamyl-meso-2,6-diaminopimeloyl-D-alanyl-D-alanine + UMP. Its pathway is cell wall biogenesis; peptidoglycan biosynthesis. Catalyzes the initial step of the lipid cycle reactions in the biosynthesis of the cell wall peptidoglycan: transfers peptidoglycan precursor phospho-MurNAc-pentapeptide from UDP-MurNAc-pentapeptide onto the lipid carrier undecaprenyl phosphate, yielding undecaprenyl-pyrophosphoryl-MurNAc-pentapeptide, known as lipid I. In Maricaulis maris (strain MCS10) (Caulobacter maris), this protein is Phospho-N-acetylmuramoyl-pentapeptide-transferase.